Here is a 406-residue protein sequence, read N- to C-terminus: Imidazolonepropionase (406 aa).

Fe(3+) contacts are provided by histidine 75 and histidine 77. Zn(2+) contacts are provided by histidine 75 and histidine 77. The 4-imidazolone-5-propanoate site is built by arginine 84, tyrosine 147, and histidine 180. Tyrosine 147 serves as a coordination point for N-formimidoyl-L-glutamate. Histidine 245 lines the Fe(3+) pocket. Histidine 245 contacts Zn(2+). Glutamine 248 serves as a coordination point for 4-imidazolone-5-propanoate. Aspartate 320 is a binding site for Fe(3+). Aspartate 320 provides a ligand contact to Zn(2+). Residues asparagine 322 and glycine 324 each contribute to the N-formimidoyl-L-glutamate site. Threonine 325 serves as a coordination point for 4-imidazolone-5-propanoate.

It belongs to the metallo-dependent hydrolases superfamily. HutI family. It depends on Zn(2+) as a cofactor. The cofactor is Fe(3+).

It is found in the cytoplasm. The enzyme catalyses 4-imidazolone-5-propanoate + H2O = N-formimidoyl-L-glutamate. Its pathway is amino-acid degradation; L-histidine degradation into L-glutamate; N-formimidoyl-L-glutamate from L-histidine: step 3/3. Catalyzes the hydrolytic cleavage of the carbon-nitrogen bond in imidazolone-5-propanoate to yield N-formimidoyl-L-glutamate. It is the third step in the universal histidine degradation pathway. The polypeptide is Imidazolonepropionase (Hyphomonas neptunium (strain ATCC 15444)).